The sequence spans 155 residues: Protein archease-like (155 aa).

Residues aspartate 26, aspartate 154, and isoleucine 155 each coordinate Ca(2+).

Belongs to the archease family.

Component of the tRNA-splicing ligase complex required to facilitate the enzymatic turnover of catalytic subunit RtcB (F16A11.2). The protein is Protein archease-like of Caenorhabditis elegans.